The following is a 64-amino-acid chain: Large ribosomal subunit protein bL35 (64 aa).

This sequence belongs to the bacterial ribosomal protein bL35 family.

The chain is Large ribosomal subunit protein bL35 from Ureaplasma urealyticum serovar 10 (strain ATCC 33699 / Western).